Reading from the N-terminus, the 332-residue chain is 2,3-diketo-L-gulonate reductase (332 aa).

His-44 functions as the Proton donor in the catalytic mechanism. Residues 168–174 (ITMVDMS), 224–225 (WK), and 304–306 (GHE) each bind NAD(+).

It belongs to the LDH2/MDH2 oxidoreductase family. DlgD subfamily. As to quaternary structure, homodimer.

The protein localises to the cytoplasm. It catalyses the reaction 3-dehydro-L-gulonate + NAD(+) = 2,3-dioxo-L-gulonate + NADH + H(+). The catalysed reaction is 3-dehydro-L-gulonate + NADP(+) = 2,3-dioxo-L-gulonate + NADPH + H(+). Functionally, catalyzes the reduction of 2,3-diketo-L-gulonate in the presence of NADH, to form 3-keto-L-gulonate. The sequence is that of 2,3-diketo-L-gulonate reductase from Salmonella heidelberg (strain SL476).